Consider the following 109-residue polypeptide: Large ribosomal subunit protein uL24 (109 aa).

Residues 85–109 (KYGTDPKTNKKVRLSRKTNNLVGGQ) form a disordered region.

Belongs to the universal ribosomal protein uL24 family. As to quaternary structure, part of the 50S ribosomal subunit.

Its function is as follows. One of two assembly initiator proteins, it binds directly to the 5'-end of the 23S rRNA, where it nucleates assembly of the 50S subunit. Functionally, one of the proteins that surrounds the polypeptide exit tunnel on the outside of the subunit. The polypeptide is Large ribosomal subunit protein uL24 (Mycoplasmoides gallisepticum (strain R(low / passage 15 / clone 2)) (Mycoplasma gallisepticum)).